The sequence spans 151 residues: MYCPFCNAQDTKVIDSRLVSEGSQVRRRRSCNECNERFTTYEFAELLMPRLIKSDGRREPFNDDKLLVGINRALEKRPVSLEDIDAAVNKLKSTLRATGEREVTSKIVGELVMELLKGLDKIAYIRFASVYRSFKDVKEFGEEIAKLETDF.

A zinc finger lies at 3–34; sequence CPFCNAQDTKVIDSRLVSEGSQVRRRRSCNEC. The ATP-cone domain occupies 49-139; sequence PRLIKSDGRR…VYRSFKDVKE (91 aa).

Belongs to the NrdR family. It depends on Zn(2+) as a cofactor.

Its function is as follows. Negatively regulates transcription of bacterial ribonucleotide reductase nrd genes and operons by binding to NrdR-boxes. The protein is Transcriptional repressor NrdR of Psychromonas ingrahamii (strain DSM 17664 / CCUG 51855 / 37).